The sequence spans 141 residues: Large ribosomal subunit protein uL13 (141 aa).

Belongs to the universal ribosomal protein uL13 family. Part of the 50S ribosomal subunit.

In terms of biological role, this protein is one of the early assembly proteins of the 50S ribosomal subunit, although it is not seen to bind rRNA by itself. It is important during the early stages of 50S assembly. The chain is Large ribosomal subunit protein uL13 from Helicobacter pylori (strain P12).